The primary structure comprises 372 residues: Meiotic drive suppressor wtf18 (372 aa).

Helical transmembrane passes span 86–106 (FLLR…TAWV), 120–140 (AFSV…FCFF), 153–173 (VTVI…AQCV), 197–217 (DLVV…FGCV), 233–253 (CSIS…IWTL), and 257–277 (LFGL…TKGL).

It belongs to the WTF family. Homomer. Interacts with other proteins that exhibit high sequence similarity.

The protein resides in the spore membrane. It is found in the vacuole membrane. Functionally, acts as a suppressor component of the dual wtf meiotic drive system, and can suppress but not confer meiotic drive by compatible poisons. Wtf meiotic drive systems promote unequal transmission of alleles from the parental zygote to progeny spores by encoding a poison and an antidote from the same locus; the poison is trans-acting and forms toxic aggregates in all spores within an ascus, wherease the antidote is spore-specific and targets aggregates for degradation by the vacuole. Meiotic drive by wtf systems therefore lead to poisoning of all progeny that do not inherit the dual poison/antidote allele, or express a compatible antidote. The protein is Meiotic drive suppressor wtf18 of Schizosaccharomyces pombe (strain 972 / ATCC 24843) (Fission yeast).